We begin with the raw amino-acid sequence, 114 residues long: Large ribosomal subunit protein bL21 (114 aa).

The protein belongs to the bacterial ribosomal protein bL21 family. Part of the 50S ribosomal subunit. Contacts protein L20.

In terms of biological role, this protein binds to 23S rRNA in the presence of protein L20. The sequence is that of Large ribosomal subunit protein bL21 from Protochlamydia amoebophila (strain UWE25).